The following is a 249-amino-acid chain: MAKILISALLCVAMFGSMALGSPECPTPNGRFASGDQCDSYTECQDGTPVEKLCPDGLLFHQRTKATGECTYAPYSTCKERARLQPANGTEECPRQFGFYPNGDATKCGVYRNCAHGVASLTKCPEGLAFNEETYQCDWPDLVESCNAEAYLGFNCPAADSADDSAAAAVDVSPEGELRYYRHPQTCKKYFVCVNGHPRLYNCGKYLAFNSQTKLCDFYNKVPECYALLKEKQRLKAEKQQPQVAQPED.

An N-terminal signal peptide occupies residues 1-21 (MAKILISALLCVAMFGSMALG). The region spanning 22-80 (SPECPTPNGRFASGDQCDSYTECQDGTPVEKLCPDGLLFHQRTKATGECTYAPYSTCKE) is the Chitin-binding type-2 1 domain. Residues cysteine 54 and cysteine 70 are joined by a disulfide bond. Asparagine 88 is a glycosylation site (N-linked (GlcNAc...) asparagine). 2 consecutive Chitin-binding type-2 domains span residues 90–148 (TEEC…SCNA) and 170–227 (VDVS…ECYA). 2 disulfides stabilise this stretch: cysteine 124–cysteine 137 and cysteine 203–cysteine 216.

Uniformly expressed throughout the cuticle of third instar larva.

It localises to the secreted. It is found in the extracellular space. The protein localises to the extracellular matrix. Its function is as follows. Chitin-binding protein that is important for the longitudinal contraction and lateral expansion of the larval cuticle during its conversion into the oval-shaped puparium case. Essential for survival to the second instar larval stage. Confers the orientated contractility and expandability of the larval cuticle by regulating the arrangement of chitin and the formation of supracellular ridges on the cuticle of third instar larvae. Essential for determining pupal body shape; required for the orientated shape change of the cuticle during metamorphosis which involves changes in the morphology of the supracellular ridges. Functionally, mainly involved in regulating pupal shape. Mainly involved in larvae survival, possibly by maintaining the normal morphology of the larval hindgut during development. This chain is Protein obstructor-E, found in Drosophila melanogaster (Fruit fly).